The following is a 961-amino-acid chain: Thrombospondin-4 (961 aa).

Positions 1–23 (MLAPRGATFLLLHLALQPWLGAG) are cleaved as a signal peptide. Positions 24–192 (AQATPQVFDL…LEELKLVVRG (169 aa)) constitute a Laminin G-like domain. In terms of domain architecture, EGF-like 1 spans 286–325 (PVRRCDSNPCFRGVRCTDTRDGFQCGPCPEGYTGNGIVCS). Cystine bridges form between cysteine 290-cysteine 301, cysteine 295-cysteine 310, cysteine 313-cysteine 324, cysteine 330-cysteine 341, cysteine 335-cysteine 350, cysteine 353-cysteine 377, cysteine 383-cysteine 394, cysteine 388-cysteine 403, cysteine 406-cysteine 418, cysteine 424-cysteine 438, cysteine 432-cysteine 448, cysteine 450-cysteine 461, cysteine 477-cysteine 482, cysteine 487-cysteine 507, cysteine 523-cysteine 543, cysteine 546-cysteine 566, cysteine 582-cysteine 602, cysteine 605-cysteine 625, cysteine 643-cysteine 663, cysteine 683-cysteine 703, and cysteine 719-cysteine 940. In terms of domain architecture, EGF-like 2; calcium-binding spans 326–363 (DVDECRYHPCYPGVRCVNLAPGFRCDACPVGFTGPMMQ). Positions 379–419 (DIDECRNGACVLNSICINTLGSYRCGPCKPGYIGDQMRGCK) constitute an EGF-like 3; calcium-binding domain. The EGF-like 4 domain maps to 420–462 (MERNCRDPELNPCSVNAQCIEERQGDVTCVCGVGWAGDGYICG). TSP type-3 repeat units lie at residues 463–495 (KDVD…NSGQ), 496–531 (EDAD…NVDQ), 532–554 (RNSD…NNDQ), 555–590 (KDTD…NSDQ), 591–613 (EDRD…NPNQ), 614–651 (SDVD…NSAQ), 652–691 (LDTD…NPAQ), and 692–727 (EDSN…EVTL). The short motif at 562 to 564 (KGD) is the Cell attachment site element. Positions 581-671 (NCQKVPNSDQ…ECDDDDDNDG (91 aa)) are disordered. A glycan (N-linked (GlcNAc...) asparagine) is linked at asparagine 612. Positions 640–652 (TDNCPTVINSAQL) are enriched in polar residues. Residues 660–671 (GDECDDDDDNDG) are compositionally biased toward acidic residues. One can recognise a TSP C-terminal domain in the interval 731–945 (RAYQTVVLDP…LKYRCNDTIP (215 aa)). N-linked (GlcNAc...) asparagine glycosylation occurs at asparagine 941.

It belongs to the thrombospondin family. Homopentamer; disulfide-linked. Interacts with PTBP3. Interacts (via EGF-like 3; calcium-binding domain) with ATF6 and facilitates its processing, activation and nuclear translocation. Interacts with NOTCH1.

It localises to the endoplasmic reticulum. Its subcellular location is the sarcoplasmic reticulum. The protein resides in the secreted. The protein localises to the extracellular space. It is found in the extracellular matrix. In terms of biological role, adhesive glycoprotein that mediates cell-to-cell and cell-to-matrix interactions and is involved in various processes including cellular proliferation, migration, adhesion and attachment, inflammatory response to CNS injury, regulation of vascular inflammation and adaptive responses of the heart to pressure overload and in myocardial function and remodeling. Binds to structural extracellular matrix (ECM) proteins and modulates the ECM in response to tissue damage, contributing to cardioprotective and adaptive ECM remodeling. Plays a role in ER stress response, via its interaction with the activating transcription factor 6 alpha (ATF6) which produces adaptive ER stress response factors and protects myocardium from pressure overload. May contribute to spinal presynaptic hypersensitivity and neuropathic pain states after peripheral nerve injury. May play a role in regulating protective astrogenesis from the subventricular zone (SVZ) niche after injury in a NOTCH1-dependent manner. This is Thrombospondin-4 (THBS4) from Bos taurus (Bovine).